Consider the following 271-residue polypeptide: Pyrroline-5-carboxylate reductase (271 aa).

The protein belongs to the pyrroline-5-carboxylate reductase family.

Its subcellular location is the cytoplasm. It carries out the reaction L-proline + NADP(+) = (S)-1-pyrroline-5-carboxylate + NADPH + 2 H(+). The enzyme catalyses L-proline + NAD(+) = (S)-1-pyrroline-5-carboxylate + NADH + 2 H(+). Its pathway is amino-acid biosynthesis; L-proline biosynthesis; L-proline from L-glutamate 5-semialdehyde: step 1/1. Its function is as follows. Catalyzes the reduction of 1-pyrroline-5-carboxylate (PCA) to L-proline. The sequence is that of Pyrroline-5-carboxylate reductase from Staphylococcus aureus (strain Mu50 / ATCC 700699).